A 67-amino-acid polypeptide reads, in one-letter code: Large ribosomal subunit protein uL29 (67 aa).

This sequence belongs to the universal ribosomal protein uL29 family.

This Halalkalibacterium halodurans (strain ATCC BAA-125 / DSM 18197 / FERM 7344 / JCM 9153 / C-125) (Bacillus halodurans) protein is Large ribosomal subunit protein uL29 (rpmC).